Consider the following 344-residue polypeptide: Heptahelical transmembrane protein 3 (344 aa).

Residues 1–76 (MKRRRSAKKS…AFSWHNETLN (76 aa)) lie on the Cytoplasmic side of the membrane. The chain crosses the membrane as a helical span at residues 77 to 97 (IWTHLIGFGIFLWMTVVSCLE). At 98 to 147 (TTEISLAGVFNGMAGVRICLSSNQTLLHDSNVTHHISCLTSQGEAIPKWP) the chain is on the extracellular side. Residues 148–168 (WLVYLVGAMGCLICSSVSHLL) traverse the membrane as a helical segment. Residues 169–184 (ACHSKRFNVFFWRLDY) lie on the Cytoplasmic side of the membrane. The helical transmembrane segment at 185–205 (AGISLMIVASFFAPIYYAFSC) threads the bilayer. Topologically, residues 206 to 210 (HPNFR) are extracellular. Residues 211–231 (LLYLSSISILGLLAIITLLSP) traverse the membrane as a helical segment. Over 232–244 (ALSTPRFRPFRAN) the chain is Cytoplasmic. The chain crosses the membrane as a helical span at residues 245–265 (LFLAMGSSAVIPATHVLCLYW). At 266–269 (DHPN) the chain is on the extracellular side. The chain crosses the membrane as a helical span at residues 270-290 (VFIALGYEIATALSYFVGATF). At 291–312 (YVSRVPERWKPGAFDMAGHSHQ) the chain is on the cytoplasmic side. Residues 313 to 333 (IFHVFVVMGALAHCVTTLLII) form a helical membrane-spanning segment. The Extracellular portion of the chain corresponds to 334-344 (DFSRASPSCGF).

The protein belongs to the ADIPOR family. As to expression, expressed in roots and flowers.

It is found in the membrane. Functionally, may play a role in abiotic stress response. This Arabidopsis thaliana (Mouse-ear cress) protein is Heptahelical transmembrane protein 3 (HHP3).